Consider the following 142-residue polypeptide: Hemoglobin subunit alpha-2 (142 aa).

In terms of domain architecture, Globin spans 2 to 142 (VLSPADKTNV…VSTVLTSKYR (141 aa)). His-59 contributes to the O2 binding site. Residue His-88 coordinates heme b.

It belongs to the globin family. As to quaternary structure, heterotetramer of two alpha chains and two beta chains. Red blood cells.

Its function is as follows. Involved in oxygen transport from the lung to the various peripheral tissues. In Arctocephalus galapagoensis (Galapagoes fur seal), this protein is Hemoglobin subunit alpha-2.